The following is a 365-amino-acid chain: Probable galacturonosyltransferase-like 10 (365 aa).

Topologically, residues 1 to 10 are cytoplasmic; that stretch reads MMSGSRLASR. A helical; Signal-anchor for type II membrane protein membrane pass occupies residues 11-31; the sequence is LIIIFSIISTSFFTVESIRLF. The Lumenal portion of the chain corresponds to 32-365; that stretch reads PDSFDDASSD…LQYNQELEIL (334 aa). Residue N209 is glycosylated (N-linked (GlcNAc...) asparagine).

This sequence belongs to the glycosyltransferase 8 family.

The protein localises to the golgi apparatus membrane. It participates in glycan metabolism; pectin biosynthesis. Its function is as follows. May be involved in pectin and/or xylans biosynthesis in cell walls. The polypeptide is Probable galacturonosyltransferase-like 10 (GATL10) (Arabidopsis thaliana (Mouse-ear cress)).